The sequence spans 283 residues: Short-chain dehydrogenase cctT (283 aa).

Positions 1-20 (MLKTVLITGCSHGGLGAAMA) are cleaved as a signal peptide. Residues isoleucine 7, threonine 33, lysine 39, glutamate 55, and asparagine 83 each contribute to the NADP(+) site. Residue asparagine 131 is glycosylated (N-linked (GlcNAc...) asparagine). The Proton donor role is filled by serine 133. The NADP(+) site is built by tyrosine 147, arginine 151, valine 180, and threonine 182. Catalysis depends on tyrosine 147, which acts as the Proton acceptor.

Belongs to the short-chain dehydrogenases/reductases (SDR) family.

In terms of biological role, short-chain dehydrogenase; part of the gene cluster that mediates the biosynthesis of the mycotoxin cyclochlorotine, a hepatotoxic and carcinogenic cyclic chlorinated pentapeptide. The function of cctT within the pathway, if any, remains undetermined. The NRPS cctN initially catalyzes the condensation of L-serine (Ser), Pro, L-2-aminobutyrate (2Abu), Ser, and beta-Phe in this order to produce isocyclotine. After the dichlorination of Pro2 catalyzed by cctP2 to produce isocyclochlorotine, the cctO-mediated transacylation of isocyclochlorotine can furnish cyclochlorotine. The subsequent hydroxylation of cyclochlorotine by cctR yields hydroxycyclochlorotine as the final product. CctP1 probably acts as a phenylalanine aminomutase and provides the uncommon building block beta-Phe. Furthermore, 2Abu can be synthesized from threonine by one of the threonine dehydratases and transaminases localized outside of the cluster. The functions of the remaining proteins encoded by the cluster, cctM and cctT, have not been identified yet. The chain is Short-chain dehydrogenase cctT from Talaromyces islandicus (Penicillium islandicum).